A 295-amino-acid chain; its full sequence is sn-glycerol-3-phosphate transport system permease protein UgpA (295 aa).

At 1–11 (MSSFRPVFRSR) the chain is on the cytoplasmic side. The chain crosses the membrane as a helical span at residues 12–32 (WLPYLLVAPQLVITVIFFIWP). Residues 33-80 (AGEALWYSLQSVDPFGFSSQFVGLENFVALFHDSYYLDAFWTTIKFSA) lie on the Periplasmic side of the membrane. The 209-residue stretch at 76–284 (IKFSALVTFS…FLVIILTVVQ (209 aa)) folds into the ABC transmembrane type-1 domain. Residues 81 to 101 (LVTFSGLLVSLFFAALVDYVV) traverse the membrane as a helical segment. Over 102–109 (RGSRFYQT) the chain is Cytoplasmic. A helical membrane pass occupies residues 110-130 (LMLLPYAVAPAVAAVLWIFLF). The Periplasmic portion of the chain corresponds to 131-157 (NPGRGLITHFLGEFGYDWNHAQNSGQA). The helical transmembrane segment at 158-178 (MFLVVFASVWKQISYNFLFFF) threads the bilayer. The Cytoplasmic segment spans residues 179–207 (AALQSIPRSLVEAAAIDGAGPIRRFFRLS). A helical membrane pass occupies residues 208–228 (LPLIAPVSFFLLVVNLVYAFF). Residues 229-262 (DTFPVIDAATAGGPVQATTTLIYKIYREGFTGLD) are Periplasmic-facing. The helical transmembrane segment at 263 to 283 (LSASAAQSVVLMFLVIILTVV) threads the bilayer. Over 284–295 (QFRYVESKVRYQ) the chain is Cytoplasmic.

The protein belongs to the binding-protein-dependent transport system permease family. UgpAE subfamily. As to quaternary structure, the complex is composed of two ATP-binding proteins (UgpC), two transmembrane proteins (UgpA and UgpE) and a solute-binding protein (UgpB).

The protein localises to the cell inner membrane. Part of the ABC transporter complex UgpBAEC involved in sn-glycerol-3-phosphate (G3P) import. Probably responsible for the translocation of the substrate across the membrane. This Salmonella choleraesuis (strain SC-B67) protein is sn-glycerol-3-phosphate transport system permease protein UgpA (ugpA).